The following is an 87-amino-acid chain: Envelope glycoprotein N (87 aa).

The signal sequence occupies residues Met-1–Gly-24. The Virion surface segment spans residues Glu-25–Ser-48. Residues Met-49–Leu-69 traverse the membrane as a helical segment. Over Ala-70–Trp-87 the chain is Intravirion.

It belongs to the herpesviridae glycoprotein N family. In terms of assembly, interacts (via N-terminus) with gM (via N-terminus). The gM-gN heterodimer forms the gCII complex.

The protein localises to the virion membrane. It localises to the host membrane. The protein resides in the host Golgi apparatus. Its subcellular location is the host trans-Golgi network. Envelope glycoprotein necessary for proper maturation of gM and modulation of its membrane fusion activity. Also plays a critical role in virion morphogenesis. This Varicella-zoster virus (strain Dumas) (HHV-3) protein is Envelope glycoprotein N.